The following is a 231-amino-acid chain: Large ribosomal subunit protein uL1 (231 aa).

This sequence belongs to the universal ribosomal protein uL1 family. In terms of assembly, part of the 50S ribosomal subunit.

In terms of biological role, binds directly to 23S rRNA. The L1 stalk is quite mobile in the ribosome, and is involved in E site tRNA release. Its function is as follows. Protein L1 is also a translational repressor protein, it controls the translation of the L11 operon by binding to its mRNA. This Shouchella clausii (strain KSM-K16) (Alkalihalobacillus clausii) protein is Large ribosomal subunit protein uL1.